Reading from the N-terminus, the 141-residue chain is UPF0310 protein SSA_0254 (141 aa).

The protein belongs to the UPF0310 family.

This Streptococcus sanguinis (strain SK36) protein is UPF0310 protein SSA_0254.